The primary structure comprises 255 residues: 5'-nucleotidase SurE (255 aa).

Residues D8, D9, S40, and N93 each contribute to the a divalent metal cation site.

Belongs to the SurE nucleotidase family. It depends on a divalent metal cation as a cofactor.

It localises to the cytoplasm. The catalysed reaction is a ribonucleoside 5'-phosphate + H2O = a ribonucleoside + phosphate. Nucleotidase that shows phosphatase activity on nucleoside 5'-monophosphates. The sequence is that of 5'-nucleotidase SurE from Rhodopseudomonas palustris (strain BisA53).